We begin with the raw amino-acid sequence, 386 residues long: MDILRKVAEIHGTPTYVYFEETLRKRSRLVKEVFEGVNLLPTFAVKANNNPVLLKILREEGFGMDVVTKGELLAAKLAGVPSHTVVWNGNGKSRDQMEHFLREDVRIVNVDSFEEMEIWRELNPEGVEYFIRVNPEVDAKTHPHISTGLKKHKFGIPLEDLDSFMERFRSMNIRGLHVHIGSQITRVEPFVEAFSKVVRASERYGFEEINIGGGWGINYSGEELDLSSYREKVVPDLKRFKRVIVEIGRYIVAPSGYLLLRVVLVKRRHNKAFVVVDGGMNVLIRPALYSAYHRIFVLGKQGKEMRADVVGPLCESGDVIAYDRELPEVEPGDIIAVENAGAYGYTMSNNYNSTTRPAEVLVRENGRISLIRRRETEMDIFKDVVM.

K46 carries the N6-(pyridoxal phosphate)lysine modification. Pyridoxal 5'-phosphate is bound by residues G214 and 246 to 249 (EIGR). 3 residues coordinate substrate: R249, R285, and Y289. The active-site Proton donor is the C314. Residues E315 and Y343 each coordinate substrate. Y343 contributes to the pyridoxal 5'-phosphate binding site.

It belongs to the Orn/Lys/Arg decarboxylase class-II family. LysA subfamily. In terms of assembly, homodimer. The cofactor is pyridoxal 5'-phosphate.

It carries out the reaction meso-2,6-diaminopimelate + H(+) = L-lysine + CO2. The protein operates within amino-acid biosynthesis; L-lysine biosynthesis via DAP pathway; L-lysine from DL-2,6-diaminopimelate: step 1/1. Specifically catalyzes the decarboxylation of meso-diaminopimelate (meso-DAP) to L-lysine. This Thermotoga maritima (strain ATCC 43589 / DSM 3109 / JCM 10099 / NBRC 100826 / MSB8) protein is Diaminopimelate decarboxylase.